A 511-amino-acid chain; its full sequence is MLNLTLKPGHISLNELRQVSRSPVNLTLDPEAIPGIEESTQVVDRVIAEDRTVYGINTGFGLLANTRIAPEDLETLQRSIVLSHAAGIGKFMSDETVRLMMVLKINSLARGFSGIRLKVINMLIDLVNAQVYPCVPQKGSVGASGDLAPLAHMSTVLLGEGQARHNGQIVSGYEALKIAGLEPITLAPKEGLALLNGTQASTAFALEGLFIAEDLFASATVCGAMSVEAALGSRRPFDPRIHRVRGHRSTMDAAMAYRHLLDTSSEIGESHTNCEKVQDPYSLRCQPQVMGACLQQIRNSAEVLQVEANSVSDNPLVFAEDNDIISGGNFHAEPVAMAADNLALAIAEIGSLSERRMALLIDSALSKLPPFLVDNGGVNSGFMIAQVTSAALASENKTLAHPASVDSLPTSANQEDHVSMATFAARRLKEMGENTRGILAVEYLSAAQGLDFRAPNKSSERIEIAKQMLREKVSFYDKDRYFAPDIEQANTLLKLALHNALMPENLLPSVH.

The segment at residues 143-145 (ASG) is a cross-link (5-imidazolinone (Ala-Gly)). S144 carries the post-translational modification 2,3-didehydroalanine (Ser).

It belongs to the PAL/histidase family. In terms of processing, contains an active site 4-methylidene-imidazol-5-one (MIO), which is formed autocatalytically by cyclization and dehydration of residues Ala-Ser-Gly.

The protein localises to the cytoplasm. The enzyme catalyses L-histidine = trans-urocanate + NH4(+). It functions in the pathway amino-acid degradation; L-histidine degradation into L-glutamate; N-formimidoyl-L-glutamate from L-histidine: step 1/3. This Vibrio parahaemolyticus serotype O3:K6 (strain RIMD 2210633) protein is Histidine ammonia-lyase.